Consider the following 207-residue polypeptide: Protein GrpE (207 aa).

Over residues 1-11 (MTETDGQKDNN) the composition is skewed to basic and acidic residues. The interval 1-40 (MTETDGQKDNNQDTAQAAADPVVSKPYIMPDDPEEGSNEA) is disordered.

The protein belongs to the GrpE family. As to quaternary structure, homodimer.

It localises to the cytoplasm. Functionally, participates actively in the response to hyperosmotic and heat shock by preventing the aggregation of stress-denatured proteins, in association with DnaK and GrpE. It is the nucleotide exchange factor for DnaK and may function as a thermosensor. Unfolded proteins bind initially to DnaJ; upon interaction with the DnaJ-bound protein, DnaK hydrolyzes its bound ATP, resulting in the formation of a stable complex. GrpE releases ADP from DnaK; ATP binding to DnaK triggers the release of the substrate protein, thus completing the reaction cycle. Several rounds of ATP-dependent interactions between DnaJ, DnaK and GrpE are required for fully efficient folding. This chain is Protein GrpE, found in Rhodopseudomonas palustris (strain ATCC BAA-98 / CGA009).